A 187-amino-acid polypeptide reads, in one-letter code: NADH-quinone oxidoreductase subunit B (187 aa).

Residues cysteine 55, cysteine 56, cysteine 121, and cysteine 150 each coordinate [4Fe-4S] cluster.

Belongs to the complex I 20 kDa subunit family. In terms of assembly, NDH-1 is composed of 14 different subunits. Subunits NuoB, C, D, E, F, and G constitute the peripheral sector of the complex. The cofactor is [4Fe-4S] cluster.

It localises to the cell inner membrane. It carries out the reaction a quinone + NADH + 5 H(+)(in) = a quinol + NAD(+) + 4 H(+)(out). Its function is as follows. NDH-1 shuttles electrons from NADH, via FMN and iron-sulfur (Fe-S) centers, to quinones in the respiratory chain. The immediate electron acceptor for the enzyme in this species is believed to be ubiquinone. Couples the redox reaction to proton translocation (for every two electrons transferred, four hydrogen ions are translocated across the cytoplasmic membrane), and thus conserves the redox energy in a proton gradient. In Bdellovibrio bacteriovorus (strain ATCC 15356 / DSM 50701 / NCIMB 9529 / HD100), this protein is NADH-quinone oxidoreductase subunit B.